We begin with the raw amino-acid sequence, 180 residues long: E1B protein, small T-antigen (180 aa).

The segment at 142-180 (GPAAPLARQGSQQEEQQQRQEEEQVQEEMRSGLDPPTEN) is disordered. Basic and acidic residues predominate over residues 157–172 (QQQRQEEEQVQEEMRS).

This sequence belongs to the adenoviridae E1B 19 kDa protein family.

This Simian adenovirus serotype 7 (SAdV-7) protein is E1B protein, small T-antigen.